The sequence spans 902 residues: Inter-alpha-trypsin inhibitor heavy chain H1 (902 aa).

Positions 1–28 are cleaved as a signal peptide; that stretch reads MDGTMGLQGLLCLCLASHLALQAMPTQG. One can recognise a VIT domain in the interval 29–158; it reads SPTDSTKGNK…KATFQLTYEE (130 aa). A glycan (S-linked (Hex...) cysteine) is linked at cysteine 52. N-linked (GlcNAc...) asparagine glycosylation occurs at asparagine 69. Position 121 is a phosphoserine (serine 121). Asparagine 277 carries an N-linked (GlcNAc...) asparagine glycan. In terms of domain architecture, VWFA spans 282-442; the sequence is NKNVVFVIDI…WNFLEVRALE (161 aa). Residues threonine 394 and threonine 399 each carry the phosphothreonine modification. The span at 637-651 shows a compositional bias: polar residues; that stretch reads SASQPSPTHPSSSIQ. The interval 637 to 656 is disordered; the sequence is SASQPSPTHPSSSIQKLPDR. Serine 639 is a glycosylation site (O-linked (GalNAc...) serine). Residue threonine 644 is glycosylated (O-linked (GalNAc...) threonine). Aspartate 663 bears the Aspartate 1-(chondroitin 4-sulfate)-ester mark. A propeptide spanning residues 664–902 is cleaved from the precursor; it reads PHFIIRVPQK…HTDYIVPDIF (239 aa). N-linked (GlcNAc...) asparagine glycosylation is present at asparagine 741.

The protein belongs to the ITIH family. I-alpha-I plasma protease inhibitors are assembled from one or two heavy chains (HC) and one light chain, bikunin. Inter-alpha-inhibitor (I-alpha-I) is composed of ITIH1/HC1, ITIH2/HC2 and bikunin. Interacts with TNFAIP6 (via Link and CUB domains). Post-translationally, heavy chains are linked to bikunin via chondroitin 4-sulfate esterified to the alpha-carboxyl of the C-terminal aspartate after propeptide cleavage. The S-linked glycan is composed of two 6-carbon sugars, possibly Glc or Gal.

The protein localises to the secreted. In terms of biological role, may act as a carrier of hyaluronan in serum or as a binding protein between hyaluronan and other matrix protein, including those on cell surfaces in tissues to regulate the localization, synthesis and degradation of hyaluronan which are essential to cells undergoing biological processes. This is Inter-alpha-trypsin inhibitor heavy chain H1 (ITIH1) from Sus scrofa (Pig).